The following is a 92-amino-acid chain: Small ribosomal subunit protein uS19c (92 aa).

This sequence belongs to the universal ribosomal protein uS19 family.

It is found in the plastid. Its subcellular location is the chloroplast. In terms of biological role, protein S19 forms a complex with S13 that binds strongly to the 16S ribosomal RNA. The protein is Small ribosomal subunit protein uS19c of Illicium oligandrum (Star anise).